A 189-amino-acid chain; its full sequence is GTP cyclohydrolase 1 (189 aa).

Residues Cys79, His82, and Cys150 each contribute to the Zn(2+) site.

The protein belongs to the GTP cyclohydrolase I family. In terms of assembly, homomer.

It carries out the reaction GTP + H2O = 7,8-dihydroneopterin 3'-triphosphate + formate + H(+). It participates in cofactor biosynthesis; 7,8-dihydroneopterin triphosphate biosynthesis; 7,8-dihydroneopterin triphosphate from GTP: step 1/1. This is GTP cyclohydrolase 1 from Rickettsia africae (strain ESF-5).